A 178-amino-acid polypeptide reads, in one-letter code: Ribosome maturation factor RimM (178 aa).

The PRC barrel domain maps to 103–177 (SKDEYYFFEI…KIVVKVPEWL (75 aa)).

Belongs to the RimM family. Binds ribosomal protein uS19.

It is found in the cytoplasm. An accessory protein needed during the final step in the assembly of 30S ribosomal subunit, possibly for assembly of the head region. Essential for efficient processing of 16S rRNA. May be needed both before and after RbfA during the maturation of 16S rRNA. It has affinity for free ribosomal 30S subunits but not for 70S ribosomes. This chain is Ribosome maturation factor RimM, found in Thermosipho africanus (strain TCF52B).